A 494-amino-acid polypeptide reads, in one-letter code: Aspartyl/glutamyl-tRNA(Asn/Gln) amidotransferase subunit B (494 aa).

It belongs to the GatB/GatE family. GatB subfamily. Heterotrimer of A, B and C subunits.

The catalysed reaction is L-glutamyl-tRNA(Gln) + L-glutamine + ATP + H2O = L-glutaminyl-tRNA(Gln) + L-glutamate + ADP + phosphate + H(+). It carries out the reaction L-aspartyl-tRNA(Asn) + L-glutamine + ATP + H2O = L-asparaginyl-tRNA(Asn) + L-glutamate + ADP + phosphate + 2 H(+). Functionally, allows the formation of correctly charged Asn-tRNA(Asn) or Gln-tRNA(Gln) through the transamidation of misacylated Asp-tRNA(Asn) or Glu-tRNA(Gln) in organisms which lack either or both of asparaginyl-tRNA or glutaminyl-tRNA synthetases. The reaction takes place in the presence of glutamine and ATP through an activated phospho-Asp-tRNA(Asn) or phospho-Glu-tRNA(Gln). The protein is Aspartyl/glutamyl-tRNA(Asn/Gln) amidotransferase subunit B of Protochlamydia amoebophila (strain UWE25).